The sequence spans 534 residues: Glucans biosynthesis protein D (534 aa).

The tat-type signal signal peptide spans 1 to 28 (MYRRDFLKSVTAAWVAFGLPNPLGGAFA).

It belongs to the OpgD/OpgG family. In terms of processing, predicted to be exported by the Tat system. The position of the signal peptide cleavage has not been experimentally proven.

The protein localises to the periplasm. The protein operates within glycan metabolism; osmoregulated periplasmic glucan (OPG) biosynthesis. Functionally, probably involved in the control of the structural glucose backbone of osmoregulated periplasmic glucans (OPGs). The polypeptide is Glucans biosynthesis protein D (Xylella fastidiosa (strain M23)).